A 909-amino-acid polypeptide reads, in one-letter code: WD repeat-containing protein 20 homolog (909 aa).

The tract at residues 58-132 is disordered; sequence SPAQGKLGSD…SAGNNTVEAR (75 aa). Low complexity-rich tracts occupy residues 80–107 and 115–127; these read GANTTTTNGSSPGASPTGAAGASTAISN and SHSNHNSNSAGNN. WD repeat units lie at residues 248 to 288, 321 to 362, 363 to 402, and 470 to 517; these read IDKT…AATA, TDNC…GIAR, SYFGGFLCVCWSPDGKYIVVGGEDDLVTVWSLHERRVVAR, and ADRN…LRHP. Disordered stretches follow at residues 458 to 483, 554 to 628, 661 to 699, 720 to 739, and 749 to 775; these read FEGFDRNSTPVHADRNGPHSASFRSD, SGQA…AGSV, SDSIDGGGGSGSGQRPSQTTSGYNSKTSNSSNKSSNSGS, SEKKGAGYEGSHSTAHRQHR, and NQHNHTGGHNNHSQSNNSSSSNFGHSS. Polar residues-rich tracts occupy residues 555-569 and 595-606; these read GQATGQQAESGSCSP and TANCTISSQSSP. 2 stretches are compositionally biased toward low complexity: residues 612-628 and 673-699; these read EAATPASTSSNAGAGSV and GQRPSQTTSGYNSKTSNSSNKSSNSGS. Residues 856 to 893 form a WD 5 repeat; that stretch reads IAHERLTALIFREDCFLTACQDGFIYTWARPGHATHAT.

In terms of assembly, component of the Usp12-46 deubiquitylase complex consisting of Usp12-46, Wdr20 and Uaf1; regulatory subunit that, together with Uaf1, stabilizes Usp12-46. The Usp12-46 deubiquitylase complex associates with arr/arrow; the interaction leads to deubiquitination and stabilization of arr/arrow.

Its function is as follows. Regulatory component of the Usp12-46 deubiquitylase complex. This complex deubiquitylates the wg/wingless-signaling receptor arr/arrow, which stabilizes the receptor and increases its concentration at the cell surface; this enhances the sensitivity of cells to wg/wingless-signal stimulation. This increases the amplitude and spatial range of the signaling response to the wg/wingless morphogen gradient, facilitating the precise concentration-dependent regulation of its target genes. Required for wg/wingless-mediated signaling in the wing imaginal disc and for wg/wingless-dependent regulation of intestinal stem cell proliferation. The polypeptide is WD repeat-containing protein 20 homolog (Drosophila melanogaster (Fruit fly)).